Consider the following 4001-residue polypeptide: Ankyrin repeat and KH domain-containing protein mask (4001 aa).

Over residues 1-14 (MNNDAKNHESDDLN) the composition is skewed to basic and acidic residues. 3 disordered regions span residues 1 to 61 (MNND…NRQL), 91 to 174 (KNEP…GGGS), and 391 to 494 (DTDT…FLLD). Residues 15–30 (VRSTAYFNQQTTTNQP) are compositionally biased toward polar residues. The span at 38–61 (NNTGSGSGSNNNNNNTNQNPNRQL) shows a compositional bias: low complexity. The span at 94–117 (PLTTTESSGVLTNTPLPSNSRLKV) shows a compositional bias: polar residues. Residues 118-159 (NNNNNTNNTAKMSGTSSSQSSATPTPPTASSSTTTTTTTNIS) show a composition bias toward low complexity. Residues 160-174 (TGGGGSGSSGGGGGS) show a composition bias toward gly residues. Acidic residues-rich tracts occupy residues 408–425 (SESEEESVSEDDIPESDP) and 434–486 (VRED…EDAP). Serine 501 bears the Phosphoserine mark. ANK repeat units follow at residues 546–575 (SGFSRSLVAACTDNDVNTVKRLLCKGNVNL), 584–614 (DGESLLSMACSAGYYELAQVLLAMSAAQVED), 618–647 (KDSTPLMEAASAGHLDIVKLLLNHNADVNA), 651–680 (TGNTPLMFACAGGQVDVVKVLLKHGANVEE), 684–713 (NGHTPLMEAASAGHVEVAKVLLEHGAGINT), 718–747 (FKESALTLACYKGHLDMVRFLLQAGADQEH), 751–780 (EMHTALMEASMDGHVEVARLLLDSGAQVNM), 784–813 (SFESPLTLAACGGHVELATLLIERGANIEE), 817–846 (EGYTPLMEAAREGHEEMVALLLSKGANINA), 851–880 (TQETALTLACCGGFMEVAAFLIKEGANLEL), 881–910 (GASTPLMEASQEGHTDLVSFLLKKKANVHA), 914–943 (TGDTALTHACENGHTDAAGVLLSYGAELEH), 947–976 (GGRTPLMKACRAGHLCTVKFLIQKGANVNK), 981–1011 (NDHTALSLACAGGHQSVVELLLKNNADPFHK), and 1014–1043 (DNSTMLIEASKGGHTRVVELLFRYPNISPT). Disordered stretches follow at residues 1046-1067 (AASANVTQAAPTSNQPGPNQMR) and 1306-1376 (QPGE…PTAL). The segment covering 1367-1376 (DNNQPVPTAL) has biased composition (polar residues). Phosphoserine is present on residues serine 1389 and serine 1588. 6 disordered regions span residues 1583-1612 (GDQPKSPTETPPEMEETTMSSPTEADRLGS), 1646-1669 (SDLESECEDDAEGGAGADCEENTL), 1682-1779 (EDGI…SLPL), 1852-1872 (VVHQKQQHGEGDQQCEDDGSA), 2084-2108 (MAQHQAQQQQGVGEPLTEQQQQQLH), and 2225-2256 (TPAPSSGVSSTKSMPGGIAKKAIDKQSRKERR). Acidic residues-rich tracts occupy residues 1646 to 1657 (SDLESECEDDAE), 1685 to 1704 (IIVEEEEDDEEEDDDDEEQD), and 1716 to 1759 (DDED…EPDS). The segment covering 1760–1776 (DQGTGNNNNNSKSGASS) has biased composition (low complexity). The span at 2084–2093 (MAQHQAQQQQ) shows a compositional bias: low complexity. Residues 2228-2237 (PSSGVSSTKS) are compositionally biased toward polar residues. 10 ANK repeats span residues 2312–2341 (NHDTALTLACAGGHEELVELLINRGANIEH), 2345–2374 (KGFTPLILAATAGHDKVVDILLKHSAELEA), 2379–2408 (TKDTPLSLACSGGRYEVVELLLSVGANKEH), 2412–2441 (SDYTPLSLAASGGYVNIIKLLLSHGAEINS), 2447–2476 (LGISPLMLAAMNGHTPAVKLLLDQGSDINA), 2481–2510 (NRNTALTLACFQGRHEVVSLLLDRRANVEH), 2514–2543 (TGLTPLMEAASGGYIEVGRVLLDKGADVNA), 2549–2578 (SRDTALTIAADKGHQKFVELLLSRNASVEV), 2582–2611 (KGNSPLWLAAHGGHLSVVELLYDHNADIDS), and 2615–2644 (RRVSCLMAAFRKGHTKIVKWMVQYVSQFPS). Residues 2674-2732 (AKEAQAVKANKNASILLEELDLERTREESRKAAAARRRERKKKKKMEKKEEKRRQQQGN) adopt a coiled-coil conformation. Serine 2687 carries the phosphoserine modification. Threonine 2698 bears the Phosphothreonine mark. A disordered region spans residues 2699 to 3033 (REESRKAAAA…TSTTTAASSV (335 aa)). The span at 2706–2719 (AAARRRERKKKKKM) shows a compositional bias: basic residues. The span at 2739–2762 (MQGDDDDASDKDDDSDKDDEDEEA) shows a compositional bias: acidic residues. Serine 2747 and serine 2753 each carry phosphoserine. Low complexity predominate over residues 2793–2810 (SQSAQAAEAAANSVSTNS). The span at 2828–2839 (EPTQPVITSNSV) shows a compositional bias: polar residues. Residues 2868-2886 (RQLDVKKEEPALKKKEEKN) are compositionally biased toward basic and acidic residues. Positions 2906-2941 (ALPAKQQPSSSSKLQSSESASNINSSTATNTSSANT) are enriched in low complexity. Positions 2950–2960 (ASQTASATTLN) are enriched in polar residues. Residues 2963-2975 (KRTEVDGWKEVVR) show a composition bias toward basic and acidic residues. Residues 2995–3004 (TATSSATSVQ) are compositionally biased toward polar residues. A compositionally biased stretch (low complexity) spans 3012–3032 (ANSSSNSSSSLTTSTTTAASS). The 65-residue stretch at 3036-3100 (MTCKKVQVPV…DATKQAHMLI (65 aa)) folds into the KH domain. Low complexity-rich tracts occupy residues 3156–3178 (ASTTSTSSSSSASSTTPAGASYS), 3195–3227 (SGRSSTSVKSNGSSTKVSASSGSGSRSGRAGSS), and 3244–3257 (NGVIKSKSESSSKS). Disordered regions lie at residues 3156–3329 (ASTT…GQGG), 3383–3457 (KPIA…QTSQ), 3520–3636 (AVGD…PPTA), and 3744–3786 (IFPQ…GGAA). The segment covering 3262 to 3278 (QKSSTTLGKSSTVSPGA) has biased composition (polar residues). The span at 3396 to 3416 (GSPTQVQQQHQTQQQQQQQLP) shows a compositional bias: low complexity. Residues 3417-3427 (QPAPVPGPQPQ) show a composition bias toward pro residues. Positions 3428-3457 (QQPLQQQQQQQAPQQQPQQPNQQQQPQTSQ) are enriched in low complexity. Residues 3539–3559 (NILSSPVGSSKASSNHSTSPP) show a composition bias toward polar residues. A compositionally biased stretch (low complexity) spans 3565 to 3577 (QQQQQQQPQSSQQ). Residue serine 3596 is modified to Phosphoserine. Positions 3774-3786 (PPGTGARQPGGAA) are enriched in low complexity. 3 positions are modified to phosphoserine: serine 3820, serine 3822, and serine 3825. Residues 3876–3945 (KAQPPGLQQP…HNMQAPPNMS (70 aa)) are disordered. Over residues 3891–3910 (SQQQQQQPLNWLKQQPQQQQ) the composition is skewed to low complexity.

In terms of assembly, may interact with Unc-89 (via protein kinase domain 1 or 2). Expressed ubiquitously in eye imaginal disk, slightly higher expression is seen in presumptive photoreceptors. Expressed in indirect flight muscle (IFM) (at protein level).

Its subcellular location is the cytoplasm. It localises to the myofibril. The protein resides in the sarcomere. It is found in the z line. The protein localises to the m line. Mediator of receptor tyrosine kinase (RTK) signaling, and may act either downstream of MAPK or transduce signaling through a parallel branch of the RTK pathway. Required for the development and organization of indirect flight muscle sarcomeres by regulating the formation of M line and H zone and the correct assembly of thick and thin filaments in the sarcomere. The polypeptide is Ankyrin repeat and KH domain-containing protein mask (Drosophila melanogaster (Fruit fly)).